A 517-amino-acid polypeptide reads, in one-letter code: GMP synthase [glutamine-hydrolyzing] (517 aa).

A Glutamine amidotransferase type-1 domain is found at 9–199 (RILILDFGSQ…VLGVCGCERL (191 aa)). C86 acts as the Nucleophile in catalysis. Catalysis depends on residues H173 and E175. The region spanning 200-392 (WTSESIIEDA…LGLPYNMLYR (193 aa)) is the GMPS ATP-PPase domain. 227-233 (SGGVDSS) is a binding site for ATP.

As to quaternary structure, homodimer.

It catalyses the reaction XMP + L-glutamine + ATP + H2O = GMP + L-glutamate + AMP + diphosphate + 2 H(+). It functions in the pathway purine metabolism; GMP biosynthesis; GMP from XMP (L-Gln route): step 1/1. Functionally, catalyzes the synthesis of GMP from XMP. In Vibrio parahaemolyticus serotype O3:K6 (strain RIMD 2210633), this protein is GMP synthase [glutamine-hydrolyzing].